The primary structure comprises 340 residues: Adenosine deaminase (340 aa).

Residues His15 and His17 each coordinate Zn(2+). Substrate is bound by residues His17, Asp19, and Gly172. Residue His199 participates in Zn(2+) binding. Residue Glu202 is the Proton donor of the active site. Asp279 lines the Zn(2+) pocket.

It belongs to the metallo-dependent hydrolases superfamily. Adenosine and AMP deaminases family. Adenosine deaminase subfamily. Requires Zn(2+) as cofactor.

It catalyses the reaction adenosine + H2O + H(+) = inosine + NH4(+). The enzyme catalyses 2'-deoxyadenosine + H2O + H(+) = 2'-deoxyinosine + NH4(+). Its function is as follows. Catalyzes the hydrolytic deamination of adenosine and 2-deoxyadenosine. This is Adenosine deaminase from Streptococcus agalactiae serotype III (strain NEM316).